Reading from the N-terminus, the 131-residue chain is MTTKRKAYVRPMPSTWWKKLPFYRFYMLREGTAVPAVWFSLELMYGVFALKHGPETWADFVGFLQNPVVLILNLIVLAAALLHTKTWFELAPKAANIIVKGEKMGPEPVIKGLWAVTAVVTAVVLFVALFW.

2 consecutive transmembrane segments (helical) span residues 60–80 (FVGF…LAAA) and 110–130 (IKGL…VALF).

It belongs to the FrdC family. In terms of assembly, part of an enzyme complex containing four subunits: a flavoprotein (FrdA), an iron-sulfur protein (FrdB), and two hydrophobic anchor proteins (FrdC and FrdD).

The protein localises to the cell inner membrane. In terms of biological role, two distinct, membrane-bound, FAD-containing enzymes are responsible for the catalysis of fumarate and succinate interconversion; fumarate reductase is used in anaerobic growth, and succinate dehydrogenase is used in aerobic growth. Anchors the catalytic components of the fumarate reductase complex to the cell inner membrane, binds quinones. The sequence is that of Fumarate reductase subunit C from Enterobacter sp. (strain 638).